The sequence spans 638 residues: ATP-dependent zinc metalloprotease FtsH (638 aa).

Residues 1 to 4 are Cytoplasmic-facing; the sequence is MNNQ. The chain crosses the membrane as a helical span at residues 5–25; that stretch reads GKNIIVWAVIFVFVILLFNVF. Residues 26-103 are Periplasmic-facing; the sequence is QSDGLLSSKN…VVPPETRMNT (78 aa). Residues 104–124 traverse the membrane as a helical segment; sequence FLSFLISWFPMLLLIGVWVFF. The Cytoplasmic portion of the chain corresponds to 125 to 638; it reads MRQMHGGGKA…PIKAKKEDKS (514 aa). 195–202 is an ATP binding site; sequence GPPGTGKT. His-417 contacts Zn(2+). The active site involves Glu-418. Zn(2+)-binding residues include His-421 and Asp-495. The interval 523 to 544 is disordered; that stretch reads SASEDMYTNRNSSSDRSESTSE.

This sequence in the central section; belongs to the AAA ATPase family. It in the C-terminal section; belongs to the peptidase M41 family. As to quaternary structure, homohexamer. Zn(2+) serves as cofactor.

It localises to the cell inner membrane. Functionally, acts as a processive, ATP-dependent zinc metallopeptidase for both cytoplasmic and membrane proteins. Plays a role in the quality control of integral membrane proteins. This Rickettsia bellii (strain RML369-C) protein is ATP-dependent zinc metalloprotease FtsH.